A 160-amino-acid polypeptide reads, in one-letter code: Crossover junction endodeoxyribonuclease RuvC (160 aa).

Catalysis depends on residues Asp7, Glu67, and Asp138. The Mg(2+) site is built by Asp7, Glu67, and Asp138.

It belongs to the RuvC family. In terms of assembly, homodimer which binds Holliday junction (HJ) DNA. The HJ becomes 2-fold symmetrical on binding to RuvC with unstacked arms; it has a different conformation from HJ DNA in complex with RuvA. In the full resolvosome a probable DNA-RuvA(4)-RuvB(12)-RuvC(2) complex forms which resolves the HJ. Mg(2+) serves as cofactor.

It localises to the cytoplasm. It catalyses the reaction Endonucleolytic cleavage at a junction such as a reciprocal single-stranded crossover between two homologous DNA duplexes (Holliday junction).. Its function is as follows. The RuvA-RuvB-RuvC complex processes Holliday junction (HJ) DNA during genetic recombination and DNA repair. Endonuclease that resolves HJ intermediates. Cleaves cruciform DNA by making single-stranded nicks across the HJ at symmetrical positions within the homologous arms, yielding a 5'-phosphate and a 3'-hydroxyl group; requires a central core of homology in the junction. The consensus cleavage sequence is 5'-(A/T)TT(C/G)-3'. Cleavage occurs on the 3'-side of the TT dinucleotide at the point of strand exchange. HJ branch migration catalyzed by RuvA-RuvB allows RuvC to scan DNA until it finds its consensus sequence, where it cleaves and resolves the cruciform DNA. The sequence is that of Crossover junction endodeoxyribonuclease RuvC from Brachyspira hyodysenteriae (strain ATCC 49526 / WA1).